A 66-amino-acid polypeptide reads, in one-letter code: Beta-mammal toxin Cv5 (66 aa).

The LCN-type CS-alpha/beta domain maps to 1–66 (KEGYIVNYYD…VWPLPKKKCN (66 aa)). 4 disulfide bridges follow: Cys12–Cys65, Cys16–Cys41, Cys25–Cys46, and Cys29–Cys48.

Expressed by the venom gland.

It is found in the secreted. With respect to regulation, is susceptible to be neutralized by human antibodies scFvs 10FG2 and HV. Its function is as follows. Beta toxins bind voltage-independently at site-4 of sodium channels (Nav) and reduces peak current and shifts the voltage of activation toward more negative potentials thereby affecting sodium channel activation and promoting spontaneous and repetitive firing. This toxin is moderately toxic to mice. The polypeptide is Beta-mammal toxin Cv5 (Centruroides villegasi (Scorpion)).